The chain runs to 159 residues: Phosphopantetheine adenylyltransferase (159 aa).

Position 9 (Thr-9) interacts with substrate. Residues 9–10 and His-17 contribute to the ATP site; that span reads TF. 3 residues coordinate substrate: Lys-41, Leu-73, and Arg-87. Residues 88–90, Glu-98, and 123–129 contribute to the ATP site; these read GLR and YSYISST.

It belongs to the bacterial CoaD family. Homohexamer. Requires Mg(2+) as cofactor.

The protein localises to the cytoplasm. It carries out the reaction (R)-4'-phosphopantetheine + ATP + H(+) = 3'-dephospho-CoA + diphosphate. It functions in the pathway cofactor biosynthesis; coenzyme A biosynthesis; CoA from (R)-pantothenate: step 4/5. Reversibly transfers an adenylyl group from ATP to 4'-phosphopantetheine, yielding dephospho-CoA (dPCoA) and pyrophosphate. This chain is Phosphopantetheine adenylyltransferase, found in Azotobacter vinelandii (strain DJ / ATCC BAA-1303).